Consider the following 231-residue polypeptide: 7-cyano-7-deazaguanine synthase (231 aa).

ATP is bound at residue 8–18; that stretch reads FSGGQDSTTCL. The Zn(2+) site is built by cysteine 188, cysteine 197, cysteine 200, and cysteine 203.

The protein belongs to the QueC family. The cofactor is Zn(2+).

The catalysed reaction is 7-carboxy-7-deazaguanine + NH4(+) + ATP = 7-cyano-7-deazaguanine + ADP + phosphate + H2O + H(+). It functions in the pathway purine metabolism; 7-cyano-7-deazaguanine biosynthesis. Its function is as follows. Catalyzes the ATP-dependent conversion of 7-carboxy-7-deazaguanine (CDG) to 7-cyano-7-deazaguanine (preQ(0)). This is 7-cyano-7-deazaguanine synthase from Salmonella newport (strain SL254).